Consider the following 818-residue polypeptide: G-type lectin S-receptor-like serine/threonine-protein kinase At1g67520 (818 aa).

The first 22 residues, 1 to 22, serve as a signal peptide directing secretion; that stretch reads MCSNGIFVSLLTLSLLLGKSCS. The Extracellular segment spans residues 23 to 387; that stretch reads ETDTLHQGQF…NENKKVAAWH (365 aa). A Bulb-type lectin domain is found at 24–149; it reads TDTLHQGQFL…DADGSMKRVL (126 aa). Asn-123, Asn-199, and Asn-337 each carry an N-linked (GlcNAc...) asparagine glycan. The PAN domain occupies 290–379; the sequence is CLAAGYVVRD…PRTIYIRGNE (90 aa). 2 disulfide bridges follow: Cys-330–Cys-353 and Cys-334–Cys-340. The chain crosses the membrane as a helical span at residues 388–408; sequence IVVATLFLMTPIIWFIIYLVL. Residues 409 to 818 are Cytoplasmic-facing; that stretch reads RKFNVKGRNC…SITITVLEAR (410 aa). Residues 496 to 785 form the Protein kinase domain; it reads FSDENKLGEG…ALSLPKEPAF (290 aa). ATP-binding positions include 502-510 and Lys-524; that span reads LGEGGFGPV. The residue at position 530 (Ser-530) is a Phosphoserine. The tract at residues 585–602 is caM-binding; it reads LRKNVLDWTLRFRIMEGI. The active-site Proton acceptor is the Asp-621. A phosphoserine mark is found at Ser-625 and Ser-638. Thr-655 carries the phosphothreonine modification. Residues Ser-699 and Ser-807 each carry the phosphoserine modification. The residue at position 813 (Thr-813) is a Phosphothreonine.

It belongs to the protein kinase superfamily. Ser/Thr protein kinase family.

The protein resides in the cell membrane. The catalysed reaction is L-seryl-[protein] + ATP = O-phospho-L-seryl-[protein] + ADP + H(+). It catalyses the reaction L-threonyl-[protein] + ATP = O-phospho-L-threonyl-[protein] + ADP + H(+). This Arabidopsis thaliana (Mouse-ear cress) protein is G-type lectin S-receptor-like serine/threonine-protein kinase At1g67520.